A 372-amino-acid polypeptide reads, in one-letter code: Rab9 effector protein with kelch motifs (372 aa).

5 Kelch repeats span residues 49-95, 100-146, 151-203, 204-250, and 254-303; these read KVFI…FLPS, SIWV…TSSA, HLYV…AAGT, KLFI…AAVA, and HVYV…VIPW. The segment at 321-342 is disordered; the sequence is LQDEKGDAAEKPETRSGGSREE. Positions 322 to 342 are enriched in basic and acidic residues; sequence QDEKGDAAEKPETRSGGSREE. The stretch at 349–372 is one Kelch 6 repeat; sequence LCFVFGGMNTEGEIYDDCLVTVVD.

As to quaternary structure, interacts with PIKFYVE; the interaction recruits RABEPK to the endosomal membrane. Interacts with RAB9 in its GTP-bound conformation. Post-translationally, phosphorylated on Ser residues by PIKFYVE.

The protein localises to the cytoplasm. It localises to the endosome membrane. Rab9 effector required for endosome to trans-Golgi network (TGN) transport. This Rattus norvegicus (Rat) protein is Rab9 effector protein with kelch motifs (Rabepk).